Here is a 325-residue protein sequence, read N- to C-terminus: tRNA U34 carboxymethyltransferase (325 aa).

Residues lysine 91, tryptophan 105, lysine 110, glycine 130, 152–154, 181–182, methionine 197, tyrosine 201, and arginine 316 contribute to the carboxy-S-adenosyl-L-methionine site; these read DPS and ME.

This sequence belongs to the class I-like SAM-binding methyltransferase superfamily. CmoB family. In terms of assembly, homotetramer.

It catalyses the reaction carboxy-S-adenosyl-L-methionine + 5-hydroxyuridine(34) in tRNA = 5-carboxymethoxyuridine(34) in tRNA + S-adenosyl-L-homocysteine + H(+). Functionally, catalyzes carboxymethyl transfer from carboxy-S-adenosyl-L-methionine (Cx-SAM) to 5-hydroxyuridine (ho5U) to form 5-carboxymethoxyuridine (cmo5U) at position 34 in tRNAs. The polypeptide is tRNA U34 carboxymethyltransferase (Saccharophagus degradans (strain 2-40 / ATCC 43961 / DSM 17024)).